Consider the following 632-residue polypeptide: Asparagine synthetase [glutamine-hydrolyzing] 1 (632 aa).

The active-site For GATase activity is Cys2. The Glutamine amidotransferase type-2 domain maps to 2-214 (CGFVGVFNKH…PGSQFTIRPD (213 aa)). Residues 52–56 (RLSII), 77–79 (NGE), and Asp102 each bind L-glutamine. ATP contacts are provided by residues Val288 and 361–362 (SG).

The protein belongs to the asparagine synthetase family.

The enzyme catalyses L-aspartate + L-glutamine + ATP + H2O = L-asparagine + L-glutamate + AMP + diphosphate + H(+). It participates in amino-acid biosynthesis; L-asparagine biosynthesis; L-asparagine from L-aspartate (L-Gln route): step 1/1. Its function is as follows. Main asparagine synthetase in vegetative cells. This Bacillus subtilis (strain 168) protein is Asparagine synthetase [glutamine-hydrolyzing] 1 (asnB).